The primary structure comprises 395 residues: Putative pyridoxal phosphate-dependent acyltransferase (395 aa).

110-111 (GF) lines the pyridoxal 5'-phosphate pocket. A substrate-binding site is contributed by His-135. Pyridoxal 5'-phosphate contacts are provided by residues Ser-185, 210 to 213 (DDAH), and 240 to 243 (TLSK). Residue Lys-243 is modified to N6-(pyridoxal phosphate)lysine. Thr-357 lines the substrate pocket.

This sequence belongs to the class-II pyridoxal-phosphate-dependent aminotransferase family. As to quaternary structure, homodimer. Pyridoxal 5'-phosphate is required as a cofactor.

This chain is Putative pyridoxal phosphate-dependent acyltransferase, found in Staphylococcus aureus (strain Mu50 / ATCC 700699).